The chain runs to 566 residues: Poly(A) polymerase pla1 (566 aa).

ATP contacts are provided by residues 86 to 88, 99 to 101, Asp153, Lys214, Tyr223, and 232 to 233; these read YGS, DID, and GV. Mg(2+)-binding residues include Asp99, Asp101, and Asp153. 2 disordered regions span residues 437-463 and 530-566; these read HEKLANDTVNEEKADNTESKADGSENG and DEVFEPGEERPKATKKRSTADTAHSTEQLKRQKVSTA.

Belongs to the poly(A) polymerase family. Requires Mg(2+) as cofactor. It depends on Mn(2+) as a cofactor.

The protein resides in the nucleus. It catalyses the reaction RNA(n) + ATP = RNA(n)-3'-adenine ribonucleotide + diphosphate. Its function is as follows. Polymerase that creates the 3'-poly(A) tail of mRNA's. May acquire specificity through interaction with a cleavage and polyadenylation factor (CF I). This chain is Poly(A) polymerase pla1 (pla1), found in Schizosaccharomyces pombe (strain 972 / ATCC 24843) (Fission yeast).